Consider the following 228-residue polypeptide: Protein crossbronx homolog (228 aa).

The UBC core domain occupies 14-168 (LQEYKILAEY…VEQCVEDSQR (155 aa)).

The protein belongs to the ubiquitin-conjugating enzyme family. FTS subfamily.

The protein is Protein crossbronx homolog of Anopheles gambiae (African malaria mosquito).